The chain runs to 59 residues: MTSVSTQLSLVLMSLLLVLPVVEAVEAGDAIALLLGVVLSITGICACLGVYARKRNGQM.

A signal peptide spans 1–24; sequence MTSVSTQLSLVLMSLLLVLPVVEA. The Extracellular segment spans residues 25–29; sequence VEAGD. Residues 30-50 traverse the membrane as a helical segment; it reads AIALLLGVVLSITGICACLGV. Residues 51 to 59 lie on the Cytoplasmic side of the membrane; it reads YARKRNGQM.

Interacts (via transmembrane domain) with antiviral protein MAVS (via transmembrane domain); the interaction disrupts MAVS interaction with RIGI and inhibits MAVS aggregation, resulting in the repression of type I interferon signaling and innate immune responses.

Its subcellular location is the endoplasmic reticulum membrane. It is found in the mitochondrion membrane. Negatively regulates antiviral innate immune responses. Disrupts the interaction of antiviral protein MAVS with innate immune receptor RIGI and inhibits MAVS aggregation, resulting in the repression of type I interferon signaling and innate immune responses. The polypeptide is Small integral membrane protein 30 (Homo sapiens (Human)).